Consider the following 224-residue polypeptide: Urease accessory protein UreF (224 aa).

The protein belongs to the UreF family. UreD, UreF and UreG form a complex that acts as a GTP-hydrolysis-dependent molecular chaperone, activating the urease apoprotein by helping to assemble the nickel containing metallocenter of UreC. The UreE protein probably delivers the nickel.

The protein localises to the cytoplasm. Its function is as follows. Required for maturation of urease via the functional incorporation of the urease nickel metallocenter. The sequence is that of Urease accessory protein UreF from Pseudomonas fluorescens (strain Pf0-1).